Reading from the N-terminus, the 512-residue chain is GMP synthase [glutamine-hydrolyzing] (512 aa).

Residues 7-197 (TIIVLDFGSQ…VFGVCGCSEG (191 aa)) form the Glutamine amidotransferase type-1 domain. Cysteine 84 functions as the Nucleophile in the catalytic mechanism. Catalysis depends on residues histidine 171 and glutamate 173. The GMPS ATP-PPase domain maps to 198–387 (WNMENFIEVE…LGIPDEIVWR (190 aa)). 225–231 (SGGVDSS) provides a ligand contact to ATP.

Homodimer.

The enzyme catalyses XMP + L-glutamine + ATP + H2O = GMP + L-glutamate + AMP + diphosphate + 2 H(+). The protein operates within purine metabolism; GMP biosynthesis; GMP from XMP (L-Gln route): step 1/1. Its function is as follows. Catalyzes the synthesis of GMP from XMP. The polypeptide is GMP synthase [glutamine-hydrolyzing] (Bacillus cereus (strain ATCC 10987 / NRS 248)).